Consider the following 119-residue polypeptide: BLOC-1-related complex subunit 8 (119 aa).

At serine 109 the chain carries Phosphoserine.

This sequence belongs to the BORCS8 family. In terms of assembly, component of the BLOC-one-related complex (BORC) which is composed of BLOC1S1, BLOC1S2, BORCS5, BORCS6, BORCS7, BORCS8, KXD1 and SNAPIN.

The protein resides in the lysosome membrane. As part of the BLOC-one-related complex (BORC), it plays a role in the movement and localization of lysosomes at the cell periphery. Associated with the cytosolic face of lysosomes, BORC recruits ARL8B to the lysosomal membrane and couples lysosomes to microtubule plus-end-directed kinesin motors, driving lysosome movement toward the cell periphery. This Homo sapiens (Human) protein is BLOC-1-related complex subunit 8.